The chain runs to 329 residues: GMP reductase (329 aa).

C178 serves as the catalytic Thioimidate intermediate. 207–230 contacts NADP(+); it reads IIADGGIRNNGDIAKSIRFGATMC.

Belongs to the IMPDH/GMPR family. GuaC type 2 subfamily.

The enzyme catalyses IMP + NH4(+) + NADP(+) = GMP + NADPH + 2 H(+). In terms of biological role, catalyzes the irreversible NADPH-dependent deamination of GMP to IMP. It functions in the conversion of nucleobase, nucleoside and nucleotide derivatives of G to A nucleotides, and in maintaining the intracellular balance of A and G nucleotides. The protein is GMP reductase of Lacticaseibacillus paracasei (strain ATCC 334 / BCRC 17002 / CCUG 31169 / CIP 107868 / KCTC 3260 / NRRL B-441) (Lactobacillus paracasei).